The primary structure comprises 66 residues: MPGGDRTGPWGQGPRTGRRAGFCSGYRMPGFMNRSVWPPFGGRWFRWFGRRFWGRRAGRAGRGRWW.

A disordered region spans residues 1–21; it reads MPGGDRTGPWGQGPRTGRRAG.

This is an uncharacterized protein from Archaeoglobus fulgidus (strain ATCC 49558 / DSM 4304 / JCM 9628 / NBRC 100126 / VC-16).